A 41-amino-acid chain; its full sequence is Photosystem I reaction center subunit IX (41 aa).

The chain crosses the membrane as a helical span at residues 7–27 (YLSTAPVLLTIWLTFTAGFII).

Belongs to the PsaJ family.

It localises to the plastid. It is found in the chloroplast thylakoid membrane. May help in the organization of the PsaE and PsaF subunits. The chain is Photosystem I reaction center subunit IX from Phaeodactylum tricornutum (strain CCAP 1055/1).